Consider the following 1274-residue polypeptide: Protein ECM30 (1274 aa).

Disordered regions lie at residues 23 to 42 (EDADASSPSRTSSPSPSLSV), 405 to 439 (RRAVSTSSHDNSSSSHASLPSSSSAAYHTKPQTKP), and 494 to 517 (SSSSSTTRSNSSTTSNGTSNDTSN). Low complexity-rich tracts occupy residues 27-42 (ASSPSRTSSPSPSLSV), 409-432 (STSSHDNSSSSHASLPSSSSAAYH), and 494-515 (SSSSSTTRSNSSTTSNGTSNDT). Phosphoserine is present on serine 635. Over residues 803 to 822 (NQQHQNQQQGQNDNRGQNQN) the composition is skewed to low complexity. The interval 803–842 (NQQHQNQQQGQNDNRGQNQNEDPGQENESPTPYLLFNPAS) is disordered. Position 1065 is a phosphoserine (serine 1065). Residues 1100 to 1149 (HLRSSSSSSSITLEKTTSNSSSIRTRPNSHHVAPETNNNNSTNGNSNNSS) are disordered. Polar residues predominate over residues 1110–1125 (ITLEKTTSNSSSIRTR). Residues 1135 to 1149 (TNNNNSTNGNSNNSS) are compositionally biased toward low complexity.

The protein localises to the cytoplasm. Seems to be involved in cell wall organization and biogenesis. The polypeptide is Protein ECM30 (ECM30) (Saccharomyces cerevisiae (strain ATCC 204508 / S288c) (Baker's yeast)).